The sequence spans 164 residues: Mediator of RNA polymerase II transcription subunit 21 (164 aa).

A disordered region spans residues 49–81 (APLPANQTQQGSTLGSNRQTVSPSTQAEAESNF). Residues 53 to 81 (ANQTQQGSTLGSNRQTVSPSTQAEAESNF) show a composition bias toward polar residues. A coiled-coil region spans residues 114 to 146 (ESQLKIIDDLSKELQSVEQEQVKKIQEKDKLLK).

The protein belongs to the Mediator complex subunit 21 family. Component of the Mediator complex.

Its subcellular location is the nucleus. Component of the Mediator complex, a coactivator involved in the regulated transcription of nearly all RNA polymerase II-dependent genes. Mediator functions as a bridge to convey information from gene-specific regulatory proteins to the basal RNA polymerase II transcription machinery. Mediator is recruited to promoters by direct interactions with regulatory proteins and serves as a scaffold for the assembly of a functional preinitiation complex with RNA polymerase II and the general transcription factors. This chain is Mediator of RNA polymerase II transcription subunit 21 (SRB7), found in Scheffersomyces stipitis (strain ATCC 58785 / CBS 6054 / NBRC 10063 / NRRL Y-11545) (Yeast).